A 181-amino-acid chain; its full sequence is TATA-box-binding protein (181 aa).

2 tandem repeats follow at residues Ile7–Leu83 and Val98–Leu173.

This sequence belongs to the TBP family.

General factor that plays a role in the activation of archaeal genes transcribed by RNA polymerase. Binds specifically to the TATA box promoter element which lies close to the position of transcription initiation. This chain is TATA-box-binding protein, found in Methanococcus maripaludis (strain C7 / ATCC BAA-1331).